Consider the following 213-residue polypeptide: MTPLKIGVGGPVGSGKTALLEVLCRELRDRYDLAVITNDIYTFEDQRILTRAAALAPERIRGVQTGGCPHTAIREDSSLNQETVEALQGEFPGLELLFIESGGDNLASSFSPELVDAWLFVLDVAGGEKVPRKGGPGIRHSDLLVINKTDLAPLVGADLRVMDADARAQRRAGDEVRPYVFTNLKSGAGVDEIIAWIEHDLLFRDVTPPRVGL.

10-17 (GPVGSGKT) contacts GTP.

Belongs to the SIMIBI class G3E GTPase family. UreG subfamily. Homodimer. UreD, UreF and UreG form a complex that acts as a GTP-hydrolysis-dependent molecular chaperone, activating the urease apoprotein by helping to assemble the nickel containing metallocenter of UreC. The UreE protein probably delivers the nickel.

Its subcellular location is the cytoplasm. Functionally, facilitates the functional incorporation of the urease nickel metallocenter. This process requires GTP hydrolysis, probably effectuated by UreG. The sequence is that of Urease accessory protein UreG from Deinococcus radiodurans (strain ATCC 13939 / DSM 20539 / JCM 16871 / CCUG 27074 / LMG 4051 / NBRC 15346 / NCIMB 9279 / VKM B-1422 / R1).